Reading from the N-terminus, the 38-residue chain is Large ribosomal subunit protein bL36 (38 aa).

It belongs to the bacterial ribosomal protein bL36 family.

The protein is Large ribosomal subunit protein bL36 of Proteus mirabilis (strain HI4320).